The sequence spans 101 residues: Small ribosomal subunit protein uS10 (101 aa).

The protein belongs to the universal ribosomal protein uS10 family. Part of the 30S ribosomal subunit.

Functionally, involved in the binding of tRNA to the ribosomes. In Mycobacterium bovis (strain ATCC BAA-935 / AF2122/97), this protein is Small ribosomal subunit protein uS10.